The following is a 226-amino-acid chain: Probable N-acetyl-alpha-D-glucosaminyl L-malate deacetylase 2 (226 aa).

Positions 13, 16, and 127 each coordinate Zn(2+).

The protein belongs to the PIGL family. Requires Zn(2+) as cofactor.

It catalyses the reaction (S)-malyl N-acetyl-alpha-D-glucosaminide + H2O = (S)-malyl alpha-D-glucosaminide + acetate. Its function is as follows. Involved in bacillithiol (BSH) biosynthesis. Catalyzes the second step of the pathway, the deacetylation of N-acetylglucosaminylmalate (GlcNAc-Mal) to glucosamine malate (GlcN-Mal). Could also be involved in bacillithiol-detoxifying pathways through formation of S-mercapturic adducts. The polypeptide is Probable N-acetyl-alpha-D-glucosaminyl L-malate deacetylase 2 (Bacillus anthracis).